The chain runs to 136 residues: Histone H3, embryonic (136 aa).

The disordered stretch occupies residues 1–43 (MARTKQTARKSTGGKAPRKQLATKAARKSAPATGGVKKPHRYR). Position 5 is an N6-methylated lysine (Lys5). Lys10 carries the N6-acetyllysine; alternate modification. At Lys10 the chain carries N6-methylated lysine; alternate. Ser11 is modified (phosphoserine). N6-acetyllysine occurs at positions 15 and 24. N6-methylated lysine is present on residues Lys28, Lys37, and Lys80.

This sequence belongs to the histone H3 family. In terms of assembly, the nucleosome is a histone octamer containing two molecules each of H2A, H2B, H3 and H4 assembled in one H3-H4 heterotetramer and two H2A-H2B heterodimers. The octamer wraps approximately 147 bp of DNA. Acetylation is generally linked to gene activation. Post-translationally, methylation at Lys-5 is linked to gene activation. Methylation at Lys-10 is linked to gene repression.

Its subcellular location is the nucleus. It localises to the chromosome. Its function is as follows. Core component of nucleosome. Nucleosomes wrap and compact DNA into chromatin, limiting DNA accessibility to the cellular machineries which require DNA as a template. Histones thereby play a central role in transcription regulation, DNA repair, DNA replication and chromosomal stability. DNA accessibility is regulated via a complex set of post-translational modifications of histones, also called histone code, and nucleosome remodeling. The chain is Histone H3, embryonic from Paracentrotus lividus (Common sea urchin).